A 151-amino-acid polypeptide reads, in one-letter code: F-box protein GID2 (151 aa).

The segment covering 1 to 25 (MKRSTTDSDLAGDAHNETNKKMKST) has biased composition (basic and acidic residues). A disordered region spans residues 1–27 (MKRSTTDSDLAGDAHNETNKKMKSTEE). The region spanning 29–75 (EIGFSNLDENLVYEVLKHVDAKTLAMSSCVSKIWHKTAQDERLWELI) is the F-box domain.

As to quaternary structure, part of some SCF(GID2) complex, which consist of SKP1B, CUL1 cullin, GID2/SLY1 and some RING box protein. Interacts directly with SKP1A and SKP1B. Interacts directly with DELLA proteins GAI, RGA, RGL1, RGL3 and probably RGL2. May have a higher affinity for phosphorylated DELLA proteins. In terms of tissue distribution, expressed in all tissues tested, including rosette leaves, green siliques, flowers, stems, cauline leaves and seedlings.

Its subcellular location is the nucleus. It functions in the pathway protein modification; protein ubiquitination. In terms of biological role, essential component of the SCF-type E3 ligase complex, SCF(GID2), a complex that positively regulates the gibberellin signaling pathway. Upon gibberellin treatment, the SCF(GID2) complex mediates the ubiquitination and subsequent degradation of DELLA proteins (GAI, RGA and RGL2), some repressors of the gibberellin pathway, leading to activate the pathway. The chain is F-box protein GID2 (GID2) from Arabidopsis thaliana (Mouse-ear cress).